The following is a 1370-amino-acid chain: DNA-directed RNA polymerase subunit beta (1370 aa).

This sequence belongs to the RNA polymerase beta chain family. The RNAP catalytic core consists of 2 alpha, 1 beta, 1 beta' and 1 omega subunit. When a sigma factor is associated with the core the holoenzyme is formed, which can initiate transcription.

The enzyme catalyses RNA(n) + a ribonucleoside 5'-triphosphate = RNA(n+1) + diphosphate. Functionally, DNA-dependent RNA polymerase catalyzes the transcription of DNA into RNA using the four ribonucleoside triphosphates as substrates. This chain is DNA-directed RNA polymerase subunit beta, found in Bordetella pertussis (strain Tohama I / ATCC BAA-589 / NCTC 13251).